Here is a 255-residue protein sequence, read N- to C-terminus: tRNA (guanine-N(1)-)-methyltransferase (255 aa).

Residues Gly-117 and 137-142 contribute to the S-adenosyl-L-methionine site; that span reads LGDFVL.

The protein belongs to the RNA methyltransferase TrmD family. Homodimer.

Its subcellular location is the cytoplasm. The enzyme catalyses guanosine(37) in tRNA + S-adenosyl-L-methionine = N(1)-methylguanosine(37) in tRNA + S-adenosyl-L-homocysteine + H(+). Functionally, specifically methylates guanosine-37 in various tRNAs. The protein is tRNA (guanine-N(1)-)-methyltransferase of Paracidovorax citrulli (strain AAC00-1) (Acidovorax citrulli).